The following is a 118-amino-acid chain: MSSAGNKGSDAEQCATIFLQQQKLTLLERNYRCRFGEIDLIMREGDTVIFVEVRMRSSDRFGGAAASITAAKQLKLTRAARHYLAGCEGDFPYRFDAILISGERENEIEWIRNAFDES.

The protein belongs to the UPF0102 family.

The polypeptide is UPF0102 protein NE0711 (Nitrosomonas europaea (strain ATCC 19718 / CIP 103999 / KCTC 2705 / NBRC 14298)).